The following is a 209-amino-acid chain: Large ribosomal subunit protein uL3 (209 aa).

The segment at 126–148 is disordered; that stretch reads HGQSRGPMAHGSRYHRRPGSMGP.

The protein belongs to the universal ribosomal protein uL3 family. Part of the 50S ribosomal subunit. Forms a cluster with proteins L14 and L19.

In terms of biological role, one of the primary rRNA binding proteins, it binds directly near the 3'-end of the 23S rRNA, where it nucleates assembly of the 50S subunit. The protein is Large ribosomal subunit protein uL3 of Listeria innocua serovar 6a (strain ATCC BAA-680 / CLIP 11262).